We begin with the raw amino-acid sequence, 450 residues long: Glucose-6-phosphate isomerase (450 aa).

E291 acts as the Proton donor in catalysis. Residues H312 and K426 contribute to the active site.

This sequence belongs to the GPI family.

The protein localises to the cytoplasm. It catalyses the reaction alpha-D-glucose 6-phosphate = beta-D-fructose 6-phosphate. It participates in carbohydrate biosynthesis; gluconeogenesis. It functions in the pathway carbohydrate degradation; glycolysis; D-glyceraldehyde 3-phosphate and glycerone phosphate from D-glucose: step 2/4. Its function is as follows. Catalyzes the reversible isomerization of glucose-6-phosphate to fructose-6-phosphate. The sequence is that of Glucose-6-phosphate isomerase from Clostridium botulinum (strain Hall / ATCC 3502 / NCTC 13319 / Type A).